A 302-amino-acid polypeptide reads, in one-letter code: Heme A synthase (302 aa).

At 1–8 (MFRKQNLK) the chain is on the cytoplasmic side. Residues 9–29 (WLGVLATIIMTFVQLGGALVT) form a helical membrane-spanning segment. Over 30 to 67 (KTGSEDGCGSSWPLCNGALLPENLPIQTIIELSHRAVS) the chain is Extracellular. Residues Cys-37 and Cys-44 are joined by a disulfide bond. The active site involves Glu-60. His-63 provides a ligand contact to heme o. A helical transmembrane segment spans residues 68–88 (AISLIVVLWLVITAWKNIGYI). Over 89 to 93 (KEIKP) the chain is Cytoplasmic. A helical transmembrane segment spans residues 94–114 (LSIISVGFLLVQALVGAAAVI). Residues 115–125 (WQQNPYVLALH) lie on the Extracellular side of the membrane. Residue His-125 coordinates heme o. The chain crosses the membrane as a helical span at residues 126–146 (FGISLISFSSVFLMTLIIFSI). The Cytoplasmic segment spans residues 147-161 (DKKYEADILFIHKPL). Residues 162–182 (RILTWLMAIIVYLTIYTGALV) traverse the membrane as a helical segment. At 183 to 215 (RHTKSSLAYGAWPIPFDDIVPHNAHDWVQFSHR) the chain is on the extracellular side. His-214 contributes to the heme b binding site. The helical transmembrane segment at 216–236 (GMALITFIWIMITFIHAIKNY) threads the bilayer. Topologically, residues 237 to 244 (SDNRTVRY) are cytoplasmic. A helical membrane pass occupies residues 245 to 265 (GYTASFILVILQVITGALSVI). At 266–270 (TNVNL) the chain is on the extracellular side. Residues 271–291 (IIALFHALFITYLFGMIAYFI) form a helical membrane-spanning segment. Position 276 (His-276) interacts with heme b. Topologically, residues 292-302 (LLMLRTTRSQK) are cytoplasmic.

Belongs to the COX15/CtaA family. Type 1 subfamily. In terms of assembly, interacts with CtaB. Requires heme b as cofactor.

It is found in the cell membrane. It catalyses the reaction Fe(II)-heme o + 2 A + H2O = Fe(II)-heme a + 2 AH2. The protein operates within porphyrin-containing compound metabolism; heme A biosynthesis; heme A from heme O: step 1/1. Its function is as follows. Catalyzes the conversion of heme O to heme A by two successive hydroxylations of the methyl group at C8. The first hydroxylation forms heme I, the second hydroxylation results in an unstable dihydroxymethyl group, which spontaneously dehydrates, resulting in the formyl group of heme A. This chain is Heme A synthase, found in Staphylococcus epidermidis (strain ATCC 35984 / DSM 28319 / BCRC 17069 / CCUG 31568 / BM 3577 / RP62A).